The sequence spans 97 residues: NADH-ubiquinone oxidoreductase chain 4L (97 aa).

3 helical membrane passes run 1–21, 23–43, and 60–80; these read MALLIIILSMFYLGLMGILLN, LHFLSILLCLELLLISLFIGI, and LLLLTLSACEASIGLSLMVAL.

This sequence belongs to the complex I subunit 4L family.

The protein resides in the mitochondrion membrane. It carries out the reaction a ubiquinone + NADH + 5 H(+)(in) = a ubiquinol + NAD(+) + 4 H(+)(out). Its function is as follows. Core subunit of the mitochondrial membrane respiratory chain NADH dehydrogenase (Complex I) that is believed to belong to the minimal assembly required for catalysis. Complex I functions in the transfer of electrons from NADH to the respiratory chain. The immediate electron acceptor for the enzyme is believed to be ubiquinone. The sequence is that of NADH-ubiquinone oxidoreductase chain 4L (ND4L) from Paracentrotus lividus (Common sea urchin).